Consider the following 303-residue polypeptide: Major fimbrium anchoring subunit FimB (303 aa).

A signal peptide spans 1–22; it reads MNDAKKYIVSVLILLVAGMFGG. A lipid anchor (N-palmitoyl cysteine) is attached at cysteine 23. Cysteine 23 carries the S-diacylglycerol cysteine lipid modification.

It belongs to the bacteroidetes fimbrillin superfamily. FimB/Mfa2 family. FimB is not part of the fimbrium itself, but anchors the fimbrium in the outer membrane. Linear, head-to-tail oligomerization of fimbrial subunits mediates assembly of the fimbrium stalk, while the minor components FimC, FimD and FimE probably form the fimbrium tip. The anchoring subunit FimB limits fimbrium length and is important for solid fimbrium attachment to the outer membrane. In its absence, the major fimbriae become very long and are easily detached from the membrane.

The protein resides in the cell outer membrane. Anchoring subunit of the major fimbriae. Regulates fimbrial length. These filamentous pili are attached to the cell surface; they mediate biofilm formation, adhesion onto host cells and onto other bacteria that are part of the oral microbiome. Fimbriae of P.gingivalis are major virulence factors. This is Major fimbrium anchoring subunit FimB from Porphyromonas gingivalis (strain ATCC 33277 / DSM 20709 / CIP 103683 / JCM 12257 / NCTC 11834 / 2561).